Reading from the N-terminus, the 193-residue chain is Ion-translocating oxidoreductase complex subunit A (193 aa).

6 helical membrane-spanning segments follow: residues Leu5 to Leu25, Phe47 to Leu67, Leu72 to Val92, Leu102 to Leu122, Ala134 to Ile154, and Ala171 to Val191.

The protein belongs to the NqrDE/RnfAE family. The complex is composed of six subunits: RsxA, RsxB, RsxC, RsxD, RsxE and RsxG.

The protein localises to the cell inner membrane. Functionally, part of a membrane-bound complex that couples electron transfer with translocation of ions across the membrane. Required to maintain the reduced state of SoxR. The sequence is that of Ion-translocating oxidoreductase complex subunit A from Escherichia coli O45:K1 (strain S88 / ExPEC).